Reading from the N-terminus, the 214-residue chain is Phosphatidylserine decarboxylase proenzyme (214 aa).

The active-site Schiff-base intermediate with substrate; via pyruvic acid is Ser-182. At Ser-182 the chain carries Pyruvic acid (Ser); by autocatalysis.

It belongs to the phosphatidylserine decarboxylase family. PSD-A subfamily. Heterodimer of a large membrane-associated beta subunit and a small pyruvoyl-containing alpha subunit. Pyruvate serves as cofactor. In terms of processing, is synthesized initially as an inactive proenzyme. Formation of the active enzyme involves a self-maturation process in which the active site pyruvoyl group is generated from an internal serine residue via an autocatalytic post-translational modification. Two non-identical subunits are generated from the proenzyme in this reaction, and the pyruvate is formed at the N-terminus of the alpha chain, which is derived from the carboxyl end of the proenzyme. The post-translation cleavage follows an unusual pathway, termed non-hydrolytic serinolysis, in which the side chain hydroxyl group of the serine supplies its oxygen atom to form the C-terminus of the beta chain, while the remainder of the serine residue undergoes an oxidative deamination to produce ammonia and the pyruvoyl prosthetic group on the alpha chain.

The protein localises to the cell membrane. It catalyses the reaction a 1,2-diacyl-sn-glycero-3-phospho-L-serine + H(+) = a 1,2-diacyl-sn-glycero-3-phosphoethanolamine + CO2. The protein operates within phospholipid metabolism; phosphatidylethanolamine biosynthesis; phosphatidylethanolamine from CDP-diacylglycerol: step 2/2. Catalyzes the formation of phosphatidylethanolamine (PtdEtn) from phosphatidylserine (PtdSer). This chain is Phosphatidylserine decarboxylase proenzyme, found in Burkholderia vietnamiensis (strain G4 / LMG 22486) (Burkholderia cepacia (strain R1808)).